Here is a 1029-residue protein sequence, read N- to C-terminus: Putative B3 domain-containing protein Os03g0621600 (1029 aa).

3 DNA-binding regions (TF-B3) span residues 147–240 (DTYF…FDPS), 339–430 (VAVM…RKMK), and 450–543 (EKYF…FDPS). A disordered region spans residues 572–605 (TSYHDQPKGNKHWMQKDSSSKGNKIGNTRSSNTP). Polar residues predominate over residues 591–605 (SKGNKIGNTRSSNTP). The TF-B3 4 DNA-binding region spans 731-824 (YKNFFKVMIG…KLKVLIFGPS (94 aa)). Over residues 852–867 (SSNSHDLPVKSPQNVS) the composition is skewed to polar residues. The disordered stretch occupies residues 852 to 882 (SSNSHDLPVKSPQNVSKSEKQWDSSEQENDT). The segment at residues 934–1029 (GCILRKSRVH…SMNVHIIPKK (96 aa)) is a DNA-binding region (TF-B3 5).

The protein resides in the nucleus. This chain is Putative B3 domain-containing protein Os03g0621600, found in Oryza sativa subsp. japonica (Rice).